A 1233-amino-acid chain; its full sequence is Capping protein-inhibiting regulator of actin dynamics (1233 aa).

Phosphoserine occurs at positions 7, 28, and 132. Disordered regions lie at residues 92–136, 157–224, and 269–527; these read AENK…SAGT, AKHK…RRRQ, and LLEE…WQEV. The span at 157–176 shows a compositional bias: basic residues; that stretch reads AKHKLAVKPKKQRVSKKHRR. Composition is skewed to basic and acidic residues over residues 200–211, 282–293, 302–322, and 329–362; these read PGEDKPTWHEEE, EAERAPREEQQR, DAER…ERRR, and AEER…KRQE. Positions 321 to 472 are required for interaction with actin-capping proteins; the sequence is RRLQAQAQAE…EQQGRSGDFQ (152 aa). Acidic residues-rich tracts occupy residues 363–376 and 397–407; these read EEEA…EQQE and EEEDLGEEEEE. The residue at position 420 (Ser420) is a Phosphoserine. Composition is skewed to basic and acidic residues over residues 432-447 and 505-527; these read DQER…HSEE and VERK…WQEV. Ser556 carries the post-translational modification Phosphoserine. At Thr559 the chain carries Phosphothreonine. 4 disordered regions span residues 560 to 586, 629 to 788, 815 to 1082, and 1097 to 1186; these read PAKD…HALP, HAEA…TTEG, EFTT…TEKV, and QKGF…ISDS. The segment covering 677-707 has biased composition (basic and acidic residues); that stretch reads KNAESDPRSSERDQLRPGDESTPRGRCDSRG. Polar residues predominate over residues 732-742; it reads GTETSKQSTEA. A compositionally biased stretch (basic and acidic residues) spans 768–783; that stretch reads ELGKGPEKSEMHREPA. Composition is skewed to polar residues over residues 815–825 and 852–863; these read EFTTSSDSETA and TNYSLRFNCDQQ. The segment covering 876–889 has biased composition (low complexity); the sequence is GDSADAGPPAAGSA. Residues 908–921 are compositionally biased toward basic and acidic residues; the sequence is QERKQAPSTRRDSA. The span at 956–967 shows a compositional bias: low complexity; that stretch reads PLAQKPALAPKP. Thr971 is subject to Phosphothreonine. A phosphoserine mark is found at Ser975 and Ser1017. The span at 994–1040 shows a compositional bias: basic and acidic residues; that stretch reads GRPDPEPSEPSKEDQESSDRRPPSPPGPEERKGQKRDEEEEATERKP. Residues 1047-1057 show a composition bias toward polar residues; the sequence is ATQQEKPSQTP. Composition is skewed to basic and acidic residues over residues 1059-1082 and 1099-1124; these read AGRK…TEKV and GFRE…KLSK. Positions 1127–1139 are enriched in low complexity; it reads VSVSVQPGSSSVS. Basic and acidic residues predominate over residues 1151–1170; that stretch reads PEEKRPETAVSRLERREQLK. A compositionally biased stretch (polar residues) spans 1174–1183; sequence TLPTSVTVEI.

As to quaternary structure, directly interacts with actin-capping proteins CAPZA1, CAPZA2 and CAPZB; this interaction decreases the binding of capping proteins to actin. Expressed in intestinal epithelial cells (at protein level).

The protein localises to the cytoplasm. It is found in the cytosol. Involved in epithelial cell integrity by acting on the maintenance of the actin cytoskeleton. Positively regulates the actin polymerization, by inhibiting the interaction of actin-capping proteins with actin. This Homo sapiens (Human) protein is Capping protein-inhibiting regulator of actin dynamics.